Reading from the N-terminus, the 299-residue chain is Bifunctional methyltransferase-like/endonuclease (299 aa).

Residues 1 to 80 form a probable methylated-DNA--protein-cysteine methyltransferase-like region; sequence MLSSKLLDIN…NLIVSPMQKA (80 aa). Residues 81–299 are endonuclease V; the sequence is LLEKEVKIIG…GRGDSNPGRD (219 aa). Mg(2+) is bound by residues Asp135 and Asn197.

The protein in the N-terminal section; belongs to the MGMT family. In the C-terminal section; belongs to the endonuclease V family. Mg(2+) serves as cofactor.

It localises to the cytoplasm. It carries out the reaction Endonucleolytic cleavage at apurinic or apyrimidinic sites to products with a 5'-phosphate.. Its function is as follows. DNA repair enzyme involved in the repair of deaminated bases. Selectively cleaves double-stranded DNA at the second phosphodiester bond 3' to a deoxyinosine leaving behind the intact lesion on the nicked DNA. This Nanoarchaeum equitans (strain Kin4-M) protein is Bifunctional methyltransferase-like/endonuclease.